Reading from the N-terminus, the 285-residue chain is Shikimate dehydrogenase (NADP(+)) (285 aa).

Residues 20 to 22 (SRS) and Thr-67 each bind shikimate. Lys-71 acts as the Proton acceptor in catalysis. Asn-93 and Asp-108 together coordinate shikimate. Residues 132–136 (GAGGA) and Met-224 each bind NADP(+). Tyr-226 serves as a coordination point for shikimate. Gly-248 contributes to the NADP(+) binding site.

It belongs to the shikimate dehydrogenase family. In terms of assembly, homodimer.

The enzyme catalyses shikimate + NADP(+) = 3-dehydroshikimate + NADPH + H(+). Its pathway is metabolic intermediate biosynthesis; chorismate biosynthesis; chorismate from D-erythrose 4-phosphate and phosphoenolpyruvate: step 4/7. Its function is as follows. Involved in the biosynthesis of the chorismate, which leads to the biosynthesis of aromatic amino acids. Catalyzes the reversible NADPH linked reduction of 3-dehydroshikimate (DHSA) to yield shikimate (SA). The chain is Shikimate dehydrogenase (NADP(+)) from Bordetella avium (strain 197N).